A 935-amino-acid chain; its full sequence is Protein translocase subunit SecA (935 aa).

Residues Gln90, Gly108–Thr112, and Asp504 contribute to the ATP site. Positions Gly543–Phe568 are disordered.

It belongs to the SecA family. Monomer and homodimer. Part of the essential Sec protein translocation apparatus which comprises SecA, SecYEG and auxiliary proteins SecDF. Other proteins may also be involved.

The protein resides in the cell inner membrane. The protein localises to the cellular thylakoid membrane. It localises to the cytoplasm. The enzyme catalyses ATP + H2O + cellular proteinSide 1 = ADP + phosphate + cellular proteinSide 2.. Part of the Sec protein translocase complex. Interacts with the SecYEG preprotein conducting channel. Has a central role in coupling the hydrolysis of ATP to the transfer of proteins into and across the cell membrane, serving as an ATP-driven molecular motor driving the stepwise translocation of polypeptide chains across the membrane. Functionally, probably participates in protein translocation into and across both the cytoplasmic and thylakoid membranes in cyanobacterial cells. This chain is Protein translocase subunit SecA, found in Rippkaea orientalis (strain PCC 8801 / RF-1) (Cyanothece sp. (strain PCC 8801)).